Here is a 95-residue protein sequence, read N- to C-terminus: uncharacterized protein (95 aa).

An N-terminal signal peptide occupies residues 1–21 (MKKITLFFTALLCLFSTSVLA).

This is an uncharacterized protein from Haemophilus influenzae (strain ATCC 51907 / DSM 11121 / KW20 / Rd).